Consider the following 363-residue polypeptide: MKESVIRKLEGLLERNEEVLALLGDASVIADQDRFRALSKEYSQLEEVVAGFKAYQQAQADLESAKEMLEEDDAEMREMAQEEIKAAKVELERLEAELQILLLPKDPNDDTNAFIEIRAGAGGDEAAIFAGDLFRMYSRYAEANRWQLEIMSSNEGEHGGFKEIIVKVSGEGAYGKLKFESGGHRVQRVPETESQGRVHTSAVTVVVMHEVPEAEAISINPADLKVDTFRSSGAGGQHVNKTDSAIRITHIPTGIVVECQDQRSQHKNRAQAMSVLAARIQAVEDEKRRSAEESTRRSLVASGDRSERVRTYNFPQGRVSEHRINLTLYRLNEVMEGDLDAILGPLMQEHQADLLAALADEQG.

Gln237 carries the N5-methylglutamine modification. Basic and acidic residues predominate over residues 284 to 296 (EDEKRRSAEESTR). The interval 284–306 (EDEKRRSAEESTRRSLVASGDRS) is disordered.

Belongs to the prokaryotic/mitochondrial release factor family. Methylated by PrmC. Methylation increases the termination efficiency of RF1.

The protein localises to the cytoplasm. In terms of biological role, peptide chain release factor 1 directs the termination of translation in response to the peptide chain termination codons UAG and UAA. This chain is Peptide chain release factor 1, found in Shewanella oneidensis (strain ATCC 700550 / JCM 31522 / CIP 106686 / LMG 19005 / NCIMB 14063 / MR-1).